The following is a 778-amino-acid chain: Protein PHOTOPERIODIC CONTROL OF HYPOCOTYL 1 (778 aa).

3 disordered regions span residues Gln74–Ser95, His186–Thr283, and Lys316–Ser335. Over residues Ser198–Ser212 the composition is skewed to basic and acidic residues. A compositionally biased stretch (low complexity) spans Ser230–Ser247. The span at Pro265 to Gln275 shows a compositional bias: basic and acidic residues. Positions Thr317 to Lys326 are enriched in polar residues. The 36-residue stretch at Trp470–Val505 folds into the F-box domain.

As to quaternary structure, interacts with light-activated phyB. Binds directly to PIF1 and COP1. Post-translationally, ubiquitinated by COP1 in darkness; this leads to proteasomal degradation. As to expression, mainly expressed in cotyledons, hypocotyls, leaves and roots.

The protein localises to the nucleus. In terms of biological role, together with PCHL, regulates growth and development adaptation to the ambient environment by controlling negatively phytochrome B (phyB) dark reversion, a temperature-dependent thermal relaxation process during which phyB reverts from the active to the inactive state. Contributes to red (R) light-triggered photomorphogenesis. Promotes various light responses such as seed germination, hypocotyl gravitropism and chlorophyll biosynthesis, via direct interaction with PIF1 and COP1. Prevents DNA-binding ability of PIF1 to negatively regulate the expressions of its target genes. Facilitates the physical interaction between phyB and PIF1 and the subsequent light-induced degradation of PIF1. The polypeptide is Protein PHOTOPERIODIC CONTROL OF HYPOCOTYL 1 (Arabidopsis thaliana (Mouse-ear cress)).